We begin with the raw amino-acid sequence, 244 residues long: 5-oxoprolinase subunit A (244 aa).

The protein belongs to the LamB/PxpA family. As to quaternary structure, forms a complex composed of PxpA, PxpB and PxpC.

It carries out the reaction 5-oxo-L-proline + ATP + 2 H2O = L-glutamate + ADP + phosphate + H(+). In terms of biological role, catalyzes the cleavage of 5-oxoproline to form L-glutamate coupled to the hydrolysis of ATP to ADP and inorganic phosphate. The protein is 5-oxoprolinase subunit A of Salmonella heidelberg (strain SL476).